We begin with the raw amino-acid sequence, 314 residues long: Diisopropyl-fluorophosphatase (314 aa).

Glu21, Asn120, Asn175, Asp229, Asp232, Leu273, and His274 together coordinate Ca(2+). The active-site Proton acceptor is the His287.

As to quaternary structure, monomer. Ca(2+) serves as cofactor.

It carries out the reaction diisopropyl fluorophosphate + H2O = diisopropyl phosphate + fluoride + 2 H(+). With respect to regulation, inhibited by chelating agents. Functionally, biological function and substrate unknown. However, it is capable of acting on phosphorus anhydride bonds (such as phosphorus-halide and phosphorus-cyanide) in organophosphorus compounds (including nerve gases). The polypeptide is Diisopropyl-fluorophosphatase (Loligo vulgaris (Common European squid)).